The following is a 662-amino-acid chain: Histidine decarboxylase (662 aa).

Substrate contacts are provided by tyrosine 81 and histidine 194. The residue at position 305 (lysine 305) is an N6-(pyridoxal phosphate)lysine.

It belongs to the group II decarboxylase family. Homodimer. Pyridoxal 5'-phosphate is required as a cofactor.

It catalyses the reaction L-histidine + H(+) = histamine + CO2. It functions in the pathway amine and polyamine biosynthesis; histamine biosynthesis; histamine from L-histidine: step 1/1. Catalyzes the biosynthesis of histamine from histidine. In Homo sapiens (Human), this protein is Histidine decarboxylase (HDC).